Reading from the N-terminus, the 257-residue chain is Glutamate racemase (257 aa).

Substrate contacts are provided by residues Asp12 to Ser13 and Tyr44 to Gly45. The active-site Proton donor/acceptor is the Cys75. Asn76–Thr77 provides a ligand contact to substrate. Cys185 serves as the catalytic Proton donor/acceptor. Residue Thr186–His187 participates in substrate binding.

It belongs to the aspartate/glutamate racemases family.

It catalyses the reaction L-glutamate = D-glutamate. Its pathway is cell wall biogenesis; peptidoglycan biosynthesis. Functionally, provides the (R)-glutamate required for cell wall biosynthesis. The protein is Glutamate racemase of Clostridium botulinum (strain 657 / Type Ba4).